The sequence spans 340 residues: Heat-inducible transcription repressor HrcA (340 aa).

Belongs to the HrcA family.

In terms of biological role, negative regulator of class I heat shock genes (grpE-dnaK-dnaJ and groELS operons). Prevents heat-shock induction of these operons. This Chromobacterium violaceum (strain ATCC 12472 / DSM 30191 / JCM 1249 / CCUG 213 / NBRC 12614 / NCIMB 9131 / NCTC 9757 / MK) protein is Heat-inducible transcription repressor HrcA.